Reading from the N-terminus, the 363-residue chain is Adenosine deaminase (363 aa).

Positions 42 and 44 each coordinate Zn(2+). Residues 44–46 (HLD), Asp-172, and Gly-201 each bind a purine D-ribonucleoside. Residues 170–184 (IGDTGHEAANIKASA) are gating helix loop; regulates binding affinity for substrates and thus substrate selectivity. His-226 provides a ligand contact to Zn(2+). A purine D-ribonucleoside contacts are provided by Glu-229, His-253, and Asp-310. Position 310 (Asp-310) interacts with Zn(2+).

This sequence belongs to the metallo-dependent hydrolases superfamily. Adenosine and AMP deaminases family. Zn(2+) serves as cofactor.

The catalysed reaction is adenosine + H2O + H(+) = inosine + NH4(+). It catalyses the reaction S-methyl-5'-thioadenosine + H2O + H(+) = S-methyl-5'-thioinosine + NH4(+). Its pathway is purine metabolism; purine nucleoside salvage. Inhibited by coformycin and methylthiocoformycin (MT-coformycin). Its function is as follows. Catalyzes the hydrolytic deamination of adenosine to produce inosine. Unlike mammalian adenosine deaminases, also catalyzes the deamination of 5'-methylthioadenosine (MTA), a by-product of polyamine biosynthesis, to produce 5'-methylthioinosine (MTI). Plays an essential role in the purine salvage pathway which allows the parasite to use host cell purines for the synthesis of nucleic acids. This is Adenosine deaminase from Plasmodium cynomolgi (strain B).